Consider the following 295-residue polypeptide: Polyprenyl transferase dpmaC (295 aa).

Transmembrane regions (helical) follow at residues 39 to 59 (LFCV…NDWI), 84 to 104 (QAFV…HVML), 109 to 124 (VHVI…YPFL), 131 to 151 (KLHI…AIPG), 168 to 188 (YCLP…TAYS), 213 to 233 (LVLV…LTQF), 237 to 257 (WLWV…LALF), and 271 to 291 (SNFV…LLKA).

This sequence belongs to the UbiA prenyltransferase family. It depends on Mg(2+) as a cofactor.

The protein localises to the membrane. Its pathway is secondary metabolite biosynthesis; terpenoid biosynthesis. Its function is as follows. Polyprenyl transferase; part of the gene cluster that mediates the biosynthesis of the diterpenoid pyrones subglutinols A and B. The first step of the pathway is the synthesis of the alpha-pyrone moiety by the polyketide synthase dpmaA via condensation of one acetyl-CoA starter unit with 3 malonyl-CoA units and 2 methylations. The alpha-pyrone is then combined with geranylgeranyl pyrophosphate (GGPP) formed by the GGPP synthase dpmaD through the action of the prenyltransferase dpmaC to yield a linear alpha-pyrone diterpenoid. Subsequent steps in the diterpenoid pyrone biosynthetic pathway involve the decalin core formation, which is initiated by the epoxidation of the C10-C11 olefin by the FAD-dependent oxidoreductase dpmaE, and is followed by a cyclization cascade catalyzed by the terpene cyclase dpmaB. The dehydrogenase dpmaF is then involved in tetrahydrofuran (THF) ring formation at the C5 unit to complete the formation of subglutinols A and B. In Metarhizium anisopliae (Entomophthora anisopliae), this protein is Polyprenyl transferase dpmaC.